The primary structure comprises 1097 residues: Error-prone DNA polymerase (1097 aa).

Residues proline 1039–arginine 1097 are disordered. Positions aspartate 1055–aspartate 1066 are enriched in basic and acidic residues.

Belongs to the DNA polymerase type-C family. DnaE2 subfamily.

It localises to the cytoplasm. The catalysed reaction is DNA(n) + a 2'-deoxyribonucleoside 5'-triphosphate = DNA(n+1) + diphosphate. Functionally, DNA polymerase involved in damage-induced mutagenesis and translesion synthesis (TLS). It is not the major replicative DNA polymerase. The polypeptide is Error-prone DNA polymerase (Allorhizobium ampelinum (strain ATCC BAA-846 / DSM 112012 / S4) (Agrobacterium vitis (strain S4))).